Reading from the N-terminus, the 413-residue chain is 2,3-diketo-5-methylthiopentyl-1-phosphate enolase (413 aa).

The Proton acceptor role is filled by Lys-98. Substrate contacts are provided by residues Lys-147, 173 to 176, His-264, Gly-337, and 359 to 360; these read KDDE and GG. Residues Lys-173, Asp-175, and Glu-176 each coordinate Mg(2+). N6-carboxylysine is present on Lys-173.

This sequence belongs to the RuBisCO large chain family. Type IV subfamily. As to quaternary structure, homodimer. The cofactor is Mg(2+).

The catalysed reaction is 5-methylsulfanyl-2,3-dioxopentyl phosphate = 2-hydroxy-5-methylsulfanyl-3-oxopent-1-enyl phosphate. Its pathway is amino-acid biosynthesis; L-methionine biosynthesis via salvage pathway; L-methionine from S-methyl-5-thio-alpha-D-ribose 1-phosphate: step 3/6. Catalyzes the enolization of 2,3-diketo-5-methylthiopentyl-1-phosphate (DK-MTP-1-P) into 2-hydroxy-3-keto-5-methylthiopentenyl-1-phosphate (HK-MTPenyl-1-P). This chain is 2,3-diketo-5-methylthiopentyl-1-phosphate enolase (mtnW), found in Geobacillus kaustophilus (strain HTA426).